Consider the following 748-residue polypeptide: Catalase-peroxidase 2 (748 aa).

The segment covering 1–24 has biased composition (polar residues); it reads MSSDTSDSRPPNPDTKTASTSESE. Residues 1–43 are disordered; it reads MSSDTSDSRPPNPDTKTASTSESENPAIPSPKPKSGAPLRNQD. The tryptophyl-tyrosyl-methioninium (Trp-Tyr) (with M-264) cross-link spans 113 to 238; the sequence is WHSAGTYRIH…YGATTMGLIY (126 aa). The Proton acceptor role is filled by histidine 114. The segment at residues 238–264 is a cross-link (tryptophyl-tyrosyl-methioninium (Tyr-Met) (with W-113)); sequence YVNPEGPEGQPDPLAAAHDIRETFGRM. Position 279 (histidine 279) interacts with heme b.

This sequence belongs to the peroxidase family. Peroxidase/catalase subfamily. Homotetramer. Heme b serves as cofactor. Formation of the three residue Trp-Tyr-Met cross-link is important for the catalase, but not the peroxidase activity of the enzyme.

It catalyses the reaction H2O2 + AH2 = A + 2 H2O. The catalysed reaction is 2 H2O2 = O2 + 2 H2O. Its function is as follows. Bifunctional enzyme with both catalase and broad-spectrum peroxidase activity. May play a role in the intracellular survival of mycobacteria. The sequence is that of Catalase-peroxidase 2 from Mycolicibacterium smegmatis (strain ATCC 700084 / mc(2)155) (Mycobacterium smegmatis).